The following is a 379-amino-acid chain: Probable RNA 3'-terminal phosphate cyclase-like protein (379 aa).

Belongs to the RNA 3'-terminal cyclase family. Type 2 subfamily. As to quaternary structure, part of the small subunit (SSU) processome, composed of more than 70 proteins and the RNA chaperone small nucleolar RNA (snoRNA) U3.

It localises to the nucleus. It is found in the nucleolus. Part of the small subunit (SSU) processome, first precursor of the small eukaryotic ribosomal subunit. During the assembly of the SSU processome in the nucleolus, many ribosome biogenesis factors, an RNA chaperone and ribosomal proteins associate with the nascent pre-rRNA and work in concert to generate RNA folding, modifications, rearrangements and cleavage as well as targeted degradation of pre-ribosomal RNA by the RNA exosome. Does not have cyclase activity. In Caenorhabditis elegans, this protein is Probable RNA 3'-terminal phosphate cyclase-like protein.